The sequence spans 398 residues: Tryptophan synthase beta chain (398 aa).

At K88 the chain carries N6-(pyridoxal phosphate)lysine.

It belongs to the TrpB family. Tetramer of two alpha and two beta chains. It depends on pyridoxal 5'-phosphate as a cofactor.

It carries out the reaction (1S,2R)-1-C-(indol-3-yl)glycerol 3-phosphate + L-serine = D-glyceraldehyde 3-phosphate + L-tryptophan + H2O. The protein operates within amino-acid biosynthesis; L-tryptophan biosynthesis; L-tryptophan from chorismate: step 5/5. The beta subunit is responsible for the synthesis of L-tryptophan from indole and L-serine. The polypeptide is Tryptophan synthase beta chain (Haemophilus influenzae (strain PittGG)).